Consider the following 158-residue polypeptide: NAD(P)H-quinone oxidoreductase subunit N (158 aa).

The protein belongs to the complex I NdhN subunit family. NDH-1 can be composed of about 15 different subunits; different subcomplexes with different compositions have been identified which probably have different functions.

It localises to the cellular thylakoid membrane. It carries out the reaction a plastoquinone + NADH + (n+1) H(+)(in) = a plastoquinol + NAD(+) + n H(+)(out). It catalyses the reaction a plastoquinone + NADPH + (n+1) H(+)(in) = a plastoquinol + NADP(+) + n H(+)(out). Functionally, NDH-1 shuttles electrons from an unknown electron donor, via FMN and iron-sulfur (Fe-S) centers, to quinones in the respiratory and/or the photosynthetic chain. The immediate electron acceptor for the enzyme in this species is believed to be plastoquinone. Couples the redox reaction to proton translocation, and thus conserves the redox energy in a proton gradient. Cyanobacterial NDH-1 also plays a role in inorganic carbon-concentration. The polypeptide is NAD(P)H-quinone oxidoreductase subunit N (Trichodesmium erythraeum (strain IMS101)).